A 602-amino-acid polypeptide reads, in one-letter code: Elongation factor 4 (602 aa).

Residues 8–189 (KNIRNFSIIA…KIITTIPAPS (182 aa)) form the tr-type G domain. Residues 20-25 (DHGKST) and 136-139 (NKID) each bind GTP.

The protein belongs to the TRAFAC class translation factor GTPase superfamily. Classic translation factor GTPase family. LepA subfamily.

Its subcellular location is the cell inner membrane. It carries out the reaction GTP + H2O = GDP + phosphate + H(+). Functionally, required for accurate and efficient protein synthesis under certain stress conditions. May act as a fidelity factor of the translation reaction, by catalyzing a one-codon backward translocation of tRNAs on improperly translocated ribosomes. Back-translocation proceeds from a post-translocation (POST) complex to a pre-translocation (PRE) complex, thus giving elongation factor G a second chance to translocate the tRNAs correctly. Binds to ribosomes in a GTP-dependent manner. The chain is Elongation factor 4 from Helicobacter pylori (strain ATCC 700392 / 26695) (Campylobacter pylori).